The sequence spans 202 residues: LexA repressor (202 aa).

Positions 28 to 48 form a DNA-binding region, H-T-H motif; sequence RAEIAMRLGFRSPNAAEEHLK. Active-site for autocatalytic cleavage activity residues include S119 and K156.

It belongs to the peptidase S24 family. In terms of assembly, homodimer.

It catalyses the reaction Hydrolysis of Ala-|-Gly bond in repressor LexA.. Functionally, represses a number of genes involved in the response to DNA damage (SOS response), including recA and lexA. Binds to the 16 bp palindromic sequence 5'-CTGTATATATATACAG-3'. In the presence of single-stranded DNA, RecA interacts with LexA causing an autocatalytic cleavage which disrupts the DNA-binding part of LexA, leading to derepression of the SOS regulon and eventually DNA repair. In Serratia proteamaculans (strain 568), this protein is LexA repressor.